We begin with the raw amino-acid sequence, 110 residues long: Large ribosomal subunit protein uL22 (110 aa).

The protein belongs to the universal ribosomal protein uL22 family. In terms of assembly, part of the 50S ribosomal subunit.

In terms of biological role, this protein binds specifically to 23S rRNA; its binding is stimulated by other ribosomal proteins, e.g. L4, L17, and L20. It is important during the early stages of 50S assembly. It makes multiple contacts with different domains of the 23S rRNA in the assembled 50S subunit and ribosome. Its function is as follows. The globular domain of the protein is located near the polypeptide exit tunnel on the outside of the subunit, while an extended beta-hairpin is found that lines the wall of the exit tunnel in the center of the 70S ribosome. In Haemophilus influenzae (strain 86-028NP), this protein is Large ribosomal subunit protein uL22.